We begin with the raw amino-acid sequence, 174 residues long: Dehydratase AgnL8 (174 aa).

Tyrosine 24, tyrosine 44, and phenylalanine 47 together coordinate substrate. Catalysis depends on residues histidine 79 and histidine 104.

It belongs to the scytalone dehydratase family. Homotrimer. Each subunit contains an active site, located in the central part of the hydrophobic core of the monomer, which functions independently.

The protein operates within secondary metabolite biosynthesis. Functionally, dehydratase; part of the gene cluster that mediates the biosynthesis of agnestins, dihydroxy-xanthone metabolites. The pathway begins with the assembly and cyclization of atrochrysone thioester by the non-reducing polyketide synthase Agnpks1. The atrochrysone carboxyl ACP thioesterase AgnL7 then breaks the thioester bond and releases the atrochrysone carboxylic acid as the first enzyme-free intermediate. The decarboxylase AgnL1 then catalyzes the concerted decarboxylation-elimination required to convert atochrysone carboxylic acid into emodin anthrone, which is further oxidized to emodin by the anthrone oxygenase AgnL2. Emodin then undergoes reduction catalyzed by the oxidoreductase AgnL4 to yield the dihydroquinone tautomer which is the substrate for reduction by the short chain dehydrogenase AgnL6 reduction to produce hydroxyketone, followed by AgnL8 dehydration and likely spontaneous autoxidation to chrysophanol. Baeyer-Villiger oxidation by the oxidase AgnL3 leads to monodictyphenone via cleavage of the C-10/C-10a bond of chrysophanol. Alternative cleavage at the C-4a/C-10 bond of chrysophanol also leads to the formation some cephalone F. Further conversion to agnestins A and B, requires reduction to dihydro-monodictyphenone, oxidation to agnestin C probably via an epoxide, and rearrangement to either agnestin A or agnestin B directly, although agnestin A or agnestin B can also interconvert. Within the cluster, AgnR1 is the only unassigned oxidoreductase present which could be involved in this conversion. However, AgnR1 seems not to be involved in this step, and thus genes involved in the proposed oxidation/reduction may be located elsewhere on the genome. Further agnestin A derivatives are probably formed by spontaneous decarboxylations, dehydrations and methanolysis reactions. In Paecilomyces divaricatus (Penicillium divaricatum), this protein is Dehydratase AgnL8.